A 48-amino-acid chain; its full sequence is Large ribosomal subunit protein eL40 (48 aa).

Belongs to the eukaryotic ribosomal protein eL40 family.

The sequence is that of Large ribosomal subunit protein eL40 from Methanocella arvoryzae (strain DSM 22066 / NBRC 105507 / MRE50).